We begin with the raw amino-acid sequence, 243 residues long: 1-(5-phosphoribosyl)-5-[(5-phosphoribosylamino)methylideneamino] imidazole-4-carboxamide isomerase (243 aa).

D8 (proton acceptor) is an active-site residue. The active-site Proton donor is D129.

This sequence belongs to the HisA/HisF family.

It localises to the cytoplasm. The catalysed reaction is 1-(5-phospho-beta-D-ribosyl)-5-[(5-phospho-beta-D-ribosylamino)methylideneamino]imidazole-4-carboxamide = 5-[(5-phospho-1-deoxy-D-ribulos-1-ylimino)methylamino]-1-(5-phospho-beta-D-ribosyl)imidazole-4-carboxamide. It participates in amino-acid biosynthesis; L-histidine biosynthesis; L-histidine from 5-phospho-alpha-D-ribose 1-diphosphate: step 4/9. The sequence is that of 1-(5-phosphoribosyl)-5-[(5-phosphoribosylamino)methylideneamino] imidazole-4-carboxamide isomerase from Carboxydothermus hydrogenoformans (strain ATCC BAA-161 / DSM 6008 / Z-2901).